We begin with the raw amino-acid sequence, 279 residues long: Bifunctional protein FolD (279 aa).

NADP(+) is bound by residues 165–167 (GRS), S190, and I231.

The protein belongs to the tetrahydrofolate dehydrogenase/cyclohydrolase family. As to quaternary structure, homodimer.

It catalyses the reaction (6R)-5,10-methylene-5,6,7,8-tetrahydrofolate + NADP(+) = (6R)-5,10-methenyltetrahydrofolate + NADPH. The enzyme catalyses (6R)-5,10-methenyltetrahydrofolate + H2O = (6R)-10-formyltetrahydrofolate + H(+). It functions in the pathway one-carbon metabolism; tetrahydrofolate interconversion. Its function is as follows. Catalyzes the oxidation of 5,10-methylenetetrahydrofolate to 5,10-methenyltetrahydrofolate and then the hydrolysis of 5,10-methenyltetrahydrofolate to 10-formyltetrahydrofolate. This is Bifunctional protein FolD from Halalkalibacterium halodurans (strain ATCC BAA-125 / DSM 18197 / FERM 7344 / JCM 9153 / C-125) (Bacillus halodurans).